Consider the following 203-residue polypeptide: N-(5'-phosphoribosyl)anthranilate isomerase (203 aa).

The protein belongs to the TrpF family.

The catalysed reaction is N-(5-phospho-beta-D-ribosyl)anthranilate = 1-(2-carboxyphenylamino)-1-deoxy-D-ribulose 5-phosphate. The protein operates within amino-acid biosynthesis; L-tryptophan biosynthesis; L-tryptophan from chorismate: step 3/5. The chain is N-(5'-phosphoribosyl)anthranilate isomerase from Geotalea uraniireducens (strain Rf4) (Geobacter uraniireducens).